Reading from the N-terminus, the 650-residue chain is Probable basic-leucine zipper transcription factor K (650 aa).

Positions 37–180 (IDNNNNNYSN…KQQKQQQQEQ (144 aa)) form a coiled coil. 2 disordered regions span residues 109 to 130 (IPQQQQQEQDQQEDQDQEQEQE) and 242 to 279 (TTLNTNLQSDNNNNNNNNNNNNNNNNNNNNNNNNNNNL). Residues 118 to 129 (DQQEDQDQEQEQ) are compositionally biased toward acidic residues. Residues 242–251 (TTLNTNLQSD) are compositionally biased toward polar residues. Residues 252–278 (NNNNNNNNNNNNNNNNNNNNNNNNNNN) are compositionally biased toward low complexity. The stretch at 259–286 (NNNNNNNNNNNNNNNNNNNNLLNEKQIE) forms a coiled coil. In terms of domain architecture, bZIP spans 305 to 368 (FNKIEKGKRN…IEIMRSEPES (64 aa)). The basic motif stretch occupies residues 307–327 (KIEKGKRNQTESSKNFRERKK). The leucine-zipper stretch occupies residues 330 to 337 (IKDIELKL). Over residues 452 to 466 (NNNNNNNNNNNNNNN) the composition is skewed to low complexity. The segment at 452-473 (NNNNNNNNNNNNNNNDNDDDNE) is disordered.

This sequence belongs to the bZIP family.

The protein localises to the nucleus. Functionally, probable transcriptional regulator. This Dictyostelium discoideum (Social amoeba) protein is Probable basic-leucine zipper transcription factor K (bzpK).